A 159-amino-acid polypeptide reads, in one-letter code: ATP synthase subunit b (159 aa).

Residues 2–22 (NISIPQIIAAILNFIILLLIV) traverse the membrane as a helical segment.

It belongs to the ATPase B chain family. F-type ATPases have 2 components, F(1) - the catalytic core - and F(0) - the membrane proton channel. F(1) has five subunits: alpha(3), beta(3), gamma(1), delta(1), epsilon(1). F(0) has three main subunits: a(1), b(2) and c(10-14). The alpha and beta chains form an alternating ring which encloses part of the gamma chain. F(1) is attached to F(0) by a central stalk formed by the gamma and epsilon chains, while a peripheral stalk is formed by the delta and b chains.

It is found in the cell membrane. Functionally, f(1)F(0) ATP synthase produces ATP from ADP in the presence of a proton or sodium gradient. F-type ATPases consist of two structural domains, F(1) containing the extramembraneous catalytic core and F(0) containing the membrane proton channel, linked together by a central stalk and a peripheral stalk. During catalysis, ATP synthesis in the catalytic domain of F(1) is coupled via a rotary mechanism of the central stalk subunits to proton translocation. In terms of biological role, component of the F(0) channel, it forms part of the peripheral stalk, linking F(1) to F(0). The chain is ATP synthase subunit b from Clostridium botulinum (strain Loch Maree / Type A3).